Here is a 318-residue protein sequence, read N- to C-terminus: MTAELVTFGETMIRLSPPEGERIETARSLEFRTAGAESNVAVAASRLGCSAAWLSKLPDSPLGRRVTTELRTHGVEPYVRWDDDARQGAYYIEQGRAPRPTNVIYDRADAAVTTARPDELAVDIVEDAAAFYTSGITPALSETLRETTGELLQTATEAGTTTAFDLNYRSKLWSPSDARDACESLFPKVDVLVAAERDIRAVLELDGDAPTLASELAGDFDFETVVVTRGEDGALARHGGTVYEQPVFETDTVDAIGTGDAFVGAFLSRLIAGEPVETALAYGAATAALKRTVHGDLAVVTPDEVERVLRGGDAGIDR.

Substrate contacts are provided by residues 35–39, tyrosine 90, 105–107, and arginine 169; these read GAESN and YDR. Residues 167-169, 228-233, and 257-260 each bind ATP; these read NYR, TRGEDG, and GTGD. Positions 260 and 296 each coordinate substrate. The active-site Proton acceptor is aspartate 260.

This sequence belongs to the carbohydrate kinase PfkB family. In terms of assembly, homohexamer.

It carries out the reaction 2-dehydro-3-deoxy-D-galactonate + ATP = 2-dehydro-3-deoxy-6-phospho-D-galactonate + ADP + H(+). Involved in galactose catabolism. Catalyzes the phosphorylation of 2-keto-3-deoxygalactonate (KDGal) to produce 2-keto-3-deoxy-6-phosphogalactonate (KDPGal). Can also phosphorylate 2-keto-3-deoxygluconate (KDG) to 2-keto-3-deoxy-6-phosphogluconate (KDPG), but the catalytic efficiency for KDGal is 50-fold higher than for KDG. This is 2-dehydro-3-deoxygalactonokinase from Haloferax volcanii (strain ATCC 29605 / DSM 3757 / JCM 8879 / NBRC 14742 / NCIMB 2012 / VKM B-1768 / DS2) (Halobacterium volcanii).